The primary structure comprises 453 residues: Chromosomal replication initiator protein DnaA (453 aa).

The interval 1–74 is domain I, interacts with DnaA modulators; sequence MKEKQFWNRI…GFEIYDAEIT (74 aa). Residues 74–113 form a domain II region; it reads TPHYIFTKPQDTTSSQVEEATNLTLYDYSPKLVSIPYSDT. Residues 114-331 are domain III, AAA+ region; that stretch reads GLKEKYTFDN…GAINDITLIA (218 aa). ATP-binding residues include Gly158, Gly160, Lys161, and Thr162. The interval 332–453 is domain IV, binds dsDNA; that stretch reads RVKKIKDITI…EIESIKKKIK (122 aa).

It belongs to the DnaA family. In terms of assembly, oligomerizes as a right-handed, spiral filament on DNA at oriC.

Its subcellular location is the cytoplasm. Plays an essential role in the initiation and regulation of chromosomal replication. ATP-DnaA binds to the origin of replication (oriC) to initiate formation of the DNA replication initiation complex once per cell cycle. Binds the DnaA box (a 9 base pair repeat at the origin) and separates the double-stranded (ds)DNA. Forms a right-handed helical filament on oriC DNA; dsDNA binds to the exterior of the filament while single-stranded (ss)DNA is stabiized in the filament's interior. The ATP-DnaA-oriC complex binds and stabilizes one strand of the AT-rich DNA unwinding element (DUE), permitting loading of DNA polymerase. After initiation quickly degrades to an ADP-DnaA complex that is not apt for DNA replication. Binds acidic phospholipids. This is Chromosomal replication initiator protein DnaA from Streptococcus pneumoniae (strain Taiwan19F-14).